The following is a 353-amino-acid chain: Quinolinate synthase (353 aa).

The iminosuccinate site is built by histidine 47 and serine 68. Cysteine 113 lines the [4Fe-4S] cluster pocket. Iminosuccinate contacts are provided by residues 139–141 (YAN) and serine 156. Cysteine 200 is a binding site for [4Fe-4S] cluster. Iminosuccinate-binding positions include 226–228 (HPE) and threonine 243. Cysteine 297 provides a ligand contact to [4Fe-4S] cluster.

It belongs to the quinolinate synthase family. Type 1 subfamily. Requires [4Fe-4S] cluster as cofactor.

It localises to the cytoplasm. The enzyme catalyses iminosuccinate + dihydroxyacetone phosphate = quinolinate + phosphate + 2 H2O + H(+). Its pathway is cofactor biosynthesis; NAD(+) biosynthesis; quinolinate from iminoaspartate: step 1/1. Functionally, catalyzes the condensation of iminoaspartate with dihydroxyacetone phosphate to form quinolinate. The chain is Quinolinate synthase from Pectobacterium atrosepticum (strain SCRI 1043 / ATCC BAA-672) (Erwinia carotovora subsp. atroseptica).